The sequence spans 401 residues: Phosphoglycerate kinase (401 aa).

Residues 24–26 (DFN), arginine 40, 63–66 (HFGR), arginine 122, and arginine 155 contribute to the substrate site. ATP-binding positions include lysine 206, glycine 297, glutamate 328, and 357-360 (GGDS).

The protein belongs to the phosphoglycerate kinase family. Monomer.

It localises to the cytoplasm. The catalysed reaction is (2R)-3-phosphoglycerate + ATP = (2R)-3-phospho-glyceroyl phosphate + ADP. It participates in carbohydrate degradation; glycolysis; pyruvate from D-glyceraldehyde 3-phosphate: step 2/5. This chain is Phosphoglycerate kinase, found in Acaryochloris marina (strain MBIC 11017).